Reading from the N-terminus, the 75-residue chain is Mating pheromone Er-10 (75 aa).

Residues 1 to 19 (MNKLAILAIIAMVLFSANA) form the signal peptide. A propeptide spanning residues 20–37 (FRFQSRIRSNVEAKTETR) is cleaved from the precursor. 3 disulfides stabilise this stretch: C40–C56, C47–C74, and C52–C64.

In terms of assembly, homodimer.

The protein resides in the secreted. In terms of biological role, mating ciliate pheromones (or gamones) are diffusible extracellular communication signals that distinguish different intraspecific classes of cells commonly referred to as 'mating types'. They prepare the latter for conjugation by changing their cell surface properties. This is Mating pheromone Er-10 (MAT10) from Euplotes raikovi.